Reading from the N-terminus, the 328-residue chain is Olfactory receptor 13A1 (328 aa).

Over M1–V43 the chain is Extracellular. N23 carries N-linked (GlcNAc...) asparagine glycosylation. The helical transmembrane segment at F44–T64 threads the bilayer. At L65–G72 the chain is on the cytoplasmic side. Residues L73–S93 traverse the membrane as a helical segment. Topologically, residues S94–A117 are extracellular. C115 and C207 are disulfide-bonded. The chain crosses the membrane as a helical span at residues Q118–Y138. Over D139–V157 the chain is Cytoplasmic. The chain crosses the membrane as a helical span at residues F158–T178. At G179–V215 the chain is on the extracellular side. Residues M216 to S235 traverse the membrane as a helical segment. Residues Y236–A255 lie on the Cytoplasmic side of the membrane. Residues F256–A276 traverse the membrane as a helical segment. Over Y277–S289 the chain is Extracellular. A helical membrane pass occupies residues K290–L310. Over R311 to N328 the chain is Cytoplasmic.

Belongs to the G-protein coupled receptor 1 family.

It localises to the cell membrane. In terms of biological role, odorant receptor. This Homo sapiens (Human) protein is Olfactory receptor 13A1 (OR13A1).